A 130-amino-acid polypeptide reads, in one-letter code: DNA-directed RNA polymerase subunit omega (130 aa).

The tract at residues 109–130 (EEELLKGLEGLAPPEEQPEEDE) is disordered.

The protein belongs to the RNA polymerase subunit omega family. The RNAP catalytic core consists of 2 alpha, 1 beta, 1 beta' and 1 omega subunit. When a sigma factor is associated with the core the holoenzyme is formed, which can initiate transcription.

It carries out the reaction RNA(n) + a ribonucleoside 5'-triphosphate = RNA(n+1) + diphosphate. Promotes RNA polymerase assembly. Latches the N- and C-terminal regions of the beta' subunit thereby facilitating its interaction with the beta and alpha subunits. In Rhodopseudomonas palustris (strain BisB5), this protein is DNA-directed RNA polymerase subunit omega.